The following is a 519-amino-acid chain: Pleckstrin homology domain-containing family A member 8 (519 aa).

The 93-residue stretch at 1 to 93 folds into the PH domain; sequence MEGVLYKWTN…WLVALGSAKA (93 aa). Position 139 is a phosphothreonine (T139). S145 bears the Phosphoserine mark. At T153 the chain carries Phosphothreonine. Positions 275-302 are disordered; that stretch reads GEENLESHDKDPAQPGSDSVCSPESPWE. The interval 330 to 473 is glycolipid transfer protein homology domain; that stretch reads IPTEAFLASC…EDFVAALTIK (144 aa).

As to quaternary structure, homodimer. Interacts with ARF1; the interaction together with phosphatidylinositol 4-phosphate binding is required for FAPP2 GlcCer transfer ability.

It is found in the golgi apparatus. It localises to the trans-Golgi network membrane. The protein resides in the membrane. Cargo transport protein that is required for apical transport from the trans-Golgi network (TGN). Transports AQP2 from the trans-Golgi network (TGN) to sites of AQP2 phosphorylation. Mediates the non-vesicular transport of glucosylceramide (GlcCer) from the trans-Golgi network (TGN) to the plasma membrane and plays a pivotal role in the synthesis of complex glycosphingolipids. Binding of both phosphatidylinositol 4-phosphate (PIP) and ARF1 are essential for the GlcCer transfer ability. Also required for primary cilium formation, possibly by being involved in the transport of raft lipids to the apical membrane, and for membrane tubulation. In Mus musculus (Mouse), this protein is Pleckstrin homology domain-containing family A member 8 (Plekha8).